We begin with the raw amino-acid sequence, 614 residues long: MSNLKRFDDEERESKYGRVFAVSGPVVTAEAMSGSAMYELVRVGYYELVGEIIRLEGDMATIQVYEETSGVTVGDPVLRTGKPLSVELGPGIMGSIFDGIQRPLKDINELTESIYIPKGVNVPSLSRVASWEFNPLNVKVGSHITGGDLYGLVHENTLVKHKMIVNPRAKGTVRYIAPSGNYKVDDVVLETEFDGEITKHTMLQVWPVRQPRPVTEKLPANHPLLTGQRVLDSLFPCVQGGTTAIPGAFGCGKTVISQALSKYSNSDVIIYVGCGERGNEMSEVLRDFPELSVEIDGVTESIMKRTALVANTSNMPVAAREASIYTGITLSEYFRDMGYNVSMMADSTSRWAEALREISGRLAEMPADSGYPAYLGARLASFYERAGRVKCLGNPEREGSVSIVGAVSPPGGDFSDPVTSATLGIVQVFWGLDKKLAQRKHFPSINWLISYSKYMRALDDFYDKNFPEFVPLRTKVKEILQEEEDLSEIVQLVGKASLAETDKITLEVAKLLKDDFLQQNSYSSYDRFCPFYKTVGMLRNIIDFYDMARHSVESTAQSENKITWNVIREAMGNIMYQLSSMKFKDPVKDGEAKIKADFEQLHEDLQQAFRNLED.

Position 142 is a phosphoserine (serine 142). Residue 247-254 (GAFGCGKT) participates in ATP binding.

The protein belongs to the ATPase alpha/beta chains family. As to quaternary structure, V-ATPase is a heteromultimeric enzyme made up of two complexes: the ATP-hydrolytic V1 complex and the proton translocation V0 complex. The V1 complex consists of three catalytic AB heterodimers that form a heterohexamer, three peripheral stalks each consisting of EG heterodimers, one central rotor including subunits D and F, and the regulatory subunits C and H. The proton translocation complex V0 consists of the proton transport subunit a, a ring of proteolipid subunits c9c'', rotary subunit d, subunits e and f, and the accessory subunits VhaAC45 and ATP6AP2.

It catalyses the reaction ATP + H2O + 4 H(+)(in) = ADP + phosphate + 5 H(+)(out). Its activity is regulated as follows. ATP hydrolysis occurs at the interface between the nucleotide-binding domains of subunits A and B. ATP hydrolysis triggers a conformational change in the subunits D and F, which induces a shift of subunit d. The c-ring is subsequently rotated and results in a continuous proton translocation across the membrane. Catalytic subunit of the V1 complex of vacuolar(H+)-ATPase (V-ATPase), a multisubunit enzyme composed of a peripheral complex (V1) that hydrolyzes ATP and a membrane integral complex (V0) that translocates protons. V-ATPase is responsible for acidifying and maintaining the pH of intracellular compartments and in some cell types, is targeted to the plasma membrane, where it is responsible for acidifying the extracellular environment. This chain is V-type proton ATPase catalytic subunit A isoform 2 (Vha68-2), found in Drosophila melanogaster (Fruit fly).